An 88-amino-acid chain; its full sequence is Small ribosomal subunit protein uS15 (88 aa).

The protein belongs to the universal ribosomal protein uS15 family. As to quaternary structure, part of the 30S ribosomal subunit. Forms a bridge to the 50S subunit in the 70S ribosome, contacting the 23S rRNA.

One of the primary rRNA binding proteins, it binds directly to 16S rRNA where it helps nucleate assembly of the platform of the 30S subunit by binding and bridging several RNA helices of the 16S rRNA. In terms of biological role, forms an intersubunit bridge (bridge B4) with the 23S rRNA of the 50S subunit in the ribosome. The protein is Small ribosomal subunit protein uS15 of Psychrobacter cryohalolentis (strain ATCC BAA-1226 / DSM 17306 / VKM B-2378 / K5).